Here is a 449-residue protein sequence, read N- to C-terminus: Tubulin beta chain (449 aa).

8 residues coordinate GTP: Gln11, Glu69, Ser138, Gly142, Thr143, Gly144, Asn204, and Asn226. A Mg(2+)-binding site is contributed by Glu69.

The protein belongs to the tubulin family. In terms of assembly, dimer of alpha and beta chains. A typical microtubule is a hollow water-filled tube with an outer diameter of 25 nm and an inner diameter of 15 nM. Alpha-beta heterodimers associate head-to-tail to form protofilaments running lengthwise along the microtubule wall with the beta-tubulin subunit facing the microtubule plus end conferring a structural polarity. Microtubules usually have 13 protofilaments but different protofilament numbers can be found in some organisms and specialized cells. It depends on Mg(2+) as a cofactor.

It localises to the cytoplasm. It is found in the cytoskeleton. Functionally, tubulin is the major constituent of microtubules, a cylinder consisting of laterally associated linear protofilaments composed of alpha- and beta-tubulin heterodimers. Microtubules grow by the addition of GTP-tubulin dimers to the microtubule end, where a stabilizing cap forms. Below the cap, tubulin dimers are in GDP-bound state, owing to GTPase activity of alpha-tubulin. This is Tubulin beta chain (TUB2) from Candida albicans (Yeast).